Consider the following 134-residue polypeptide: S-adenosylmethionine decarboxylase proenzyme (134 aa).

The Schiff-base intermediate with substrate; via pyruvic acid role is filled by Ser-64. The residue at position 64 (Ser-64) is a Pyruvic acid (Ser); by autocatalysis. The Proton acceptor; for processing activity role is filled by His-69. Cys-84 (proton donor; for catalytic activity) is an active-site residue.

This sequence belongs to the prokaryotic AdoMetDC family. Type 1 subfamily. As to quaternary structure, heterotetramer of two alpha and two beta chains arranged as a dimer of alpha/beta heterodimers. Pyruvate is required as a cofactor. Is synthesized initially as an inactive proenzyme. Formation of the active enzyme involves a self-maturation process in which the active site pyruvoyl group is generated from an internal serine residue via an autocatalytic post-translational modification. Two non-identical subunits are generated from the proenzyme in this reaction, and the pyruvate is formed at the N-terminus of the alpha chain, which is derived from the carboxyl end of the proenzyme. The post-translation cleavage follows an unusual pathway, termed non-hydrolytic serinolysis, in which the side chain hydroxyl group of the serine supplies its oxygen atom to form the C-terminus of the beta chain, while the remainder of the serine residue undergoes an oxidative deamination to produce ammonia and the pyruvoyl group blocking the N-terminus of the alpha chain.

It catalyses the reaction S-adenosyl-L-methionine + H(+) = S-adenosyl 3-(methylsulfanyl)propylamine + CO2. The protein operates within amine and polyamine biosynthesis; S-adenosylmethioninamine biosynthesis; S-adenosylmethioninamine from S-adenosyl-L-methionine: step 1/1. In terms of biological role, catalyzes the decarboxylation of S-adenosylmethionine to S-adenosylmethioninamine (dcAdoMet), the propylamine donor required for the synthesis of the polyamines spermine and spermidine from the diamine putrescine. The polypeptide is S-adenosylmethionine decarboxylase proenzyme (Hydrogenobaculum sp. (strain Y04AAS1)).